Here is a 135-residue protein sequence, read N- to C-terminus: ATP synthase epsilon chain (135 aa).

The protein belongs to the ATPase epsilon chain family. As to quaternary structure, F-type ATPases have 2 components, CF(1) - the catalytic core - and CF(0) - the membrane proton channel. CF(1) has five subunits: alpha(3), beta(3), gamma(1), delta(1), epsilon(1). CF(0) has three main subunits: a, b and c.

The protein localises to the cell inner membrane. Functionally, produces ATP from ADP in the presence of a proton gradient across the membrane. This Rhodopseudomonas palustris (strain BisB18) protein is ATP synthase epsilon chain.